The sequence spans 507 residues: Cobyric acid synthase (507 aa).

Positions 251-448 constitute a GATase cobBQ-type domain; the sequence is DIDIAVVHLP…LHGLFDSDAF (198 aa). Cysteine 332 serves as the catalytic Nucleophile. Histidine 440 is an active-site residue.

It belongs to the CobB/CobQ family. CobQ subfamily.

Its pathway is cofactor biosynthesis; adenosylcobalamin biosynthesis. Catalyzes amidations at positions B, D, E, and G on adenosylcobyrinic A,C-diamide. NH(2) groups are provided by glutamine, and one molecule of ATP is hydrogenolyzed for each amidation. This is Cobyric acid synthase from Klebsiella pneumoniae subsp. pneumoniae (strain ATCC 700721 / MGH 78578).